The following is a 255-amino-acid chain: tRNA (guanine-N(1)-)-methyltransferase (255 aa).

S-adenosyl-L-methionine contacts are provided by residues glycine 117 and 137–142 (LGDFVL).

The protein belongs to the RNA methyltransferase TrmD family. In terms of assembly, homodimer.

It localises to the cytoplasm. It catalyses the reaction guanosine(37) in tRNA + S-adenosyl-L-methionine = N(1)-methylguanosine(37) in tRNA + S-adenosyl-L-homocysteine + H(+). Specifically methylates guanosine-37 in various tRNAs. The protein is tRNA (guanine-N(1)-)-methyltransferase of Paraburkholderia phymatum (strain DSM 17167 / CIP 108236 / LMG 21445 / STM815) (Burkholderia phymatum).